The sequence spans 315 residues: Calcium homeostasis modulator protein 4 (315 aa).

The Cytoplasmic segment spans residues 1-14 (MSPDLNCISSSLLR). A helical transmembrane segment spans residues 15 to 37 (SEPCINSLIAILTVCGQQLFSSY). The Extracellular portion of the chain corresponds to 38–48 (TFSCPCQVGKN). 2 disulfides stabilise this stretch: C41-C132 and C43-C163. Residues 49–71 (FYYGSAFLVVPALILLIAGYALR) traverse the membrane as a helical segment. Over 72–104 (GQMWTVASEYCCCSCTPPYRRSSPLERRLACLM) the chain is Cytoplasmic. The chain crosses the membrane as a helical span at residues 105–130 (FFDITGRALVAPLTWLTVTLLTGTYY). Residues 131–184 (ECAASEFASVDQYPMFANVTPSKREEMLAGFPCYTSAPSDVIPIRDEVALLHRY) are Extracellular-facing. Residues 185–208 (QSQMLGWILVVLATIALLLSKCLA) traverse the membrane as a helical segment. At 209–315 (RCCSPLTSLQ…DRQEGIEMKP (107 aa)) the chain is on the cytoplasmic side.

This sequence belongs to the CALHM family. In terms of assembly, oligomerizes to form decameric and undecameric channels. Two hemichannels can assemble in a tail-to-tail manner to form a gap junction.

The protein resides in the cell membrane. In terms of biological role, may assemble to form gap junction channel-like structures involved in intercellular communication. Channel gating and ion conductance are likely regulated by membrane lipids rather than by membrane depolarization or extracellular calcium levels. This chain is Calcium homeostasis modulator protein 4, found in Mus musculus (Mouse).